Consider the following 222-residue polypeptide: Ribosomal RNA small subunit methyltransferase G (222 aa).

Residues glycine 80, leucine 85, and arginine 149 each contribute to the S-adenosyl-L-methionine site.

It belongs to the methyltransferase superfamily. RNA methyltransferase RsmG family.

It localises to the cytoplasm. Functionally, specifically methylates the N7 position of a guanine in 16S rRNA. The chain is Ribosomal RNA small subunit methyltransferase G from Treponema pallidum (strain Nichols).